Here is a 76-residue protein sequence, read N- to C-terminus: Small ribosomal subunit protein bS18 (76 aa).

Belongs to the bacterial ribosomal protein bS18 family. As to quaternary structure, part of the 30S ribosomal subunit. Forms a tight heterodimer with protein bS6.

Its function is as follows. Binds as a heterodimer with protein bS6 to the central domain of the 16S rRNA, where it helps stabilize the platform of the 30S subunit. The polypeptide is Small ribosomal subunit protein bS18 (Azotobacter vinelandii (strain DJ / ATCC BAA-1303)).